The sequence spans 8892 residues: MENPNNGQAHFEPSKLVLGRVAADLFDTDVDSLDWGKSFIMLGGDSILAIDFIVRCRDAGILVDMRDLLTAGTLAQLAESIAQQNTGAGNGVNGHANGNGMNGNGLHNEATIRNGSDDLTTSAAAAGRRLRFATMEIPENTDASIISTAMERIVDRHSALRSNWSISSTGKWIITTASGSGLKSRQFFYGEFAEATEVTDAFEWLRKALLSDELFPSGCLVIPSDAPGCSHTIVLAADANVVDALSMGLVLRELRETINGTQLELSSDFQFSDWIARGCQGLEAQVERANTTKSNSITDTGALKLNGNTRDNIDFQLSRLATERLFAAQTHAALRTSPVDIVNAAVSQSLGPRYRDTENVLTIISAYSIREEKDIPLDSIGCYEVETELAATAPVPGETLVHLVRQMRDARAGFSADSRSSTAIYVDCTRLCHFEEGDYSPWLSDPTPDHSPYVSLAMIAGQVHVSLHFGIARPDDKLIADRLRSCLDEIVDELAKAPRMGTLHDFPLVRWSYSALDGLARDLQTHGLDFGDIESIGPSTSVQESFFVSQAINPGSYVSHATLRLLPTSANVPRRVETEKVVRAWSDIVERHAMLRTAFAESNDRPGKFDQLVFKPTALPPRVIVISSSAETSIVSPFTAGRFESPLRLCIYEINAEELRLELEISHALVDGHSAKILLHDIRASYLQSAYFSQSAPLPYTVFASRQQATLSEGEASAGITYWTSYLNEASESHLPLITTNPQLKDLETTRCSVSVPDGKLRAVCGELSITPANLFHVAWALALRRIILSDRITFSYIVSGRNSDADGVEATVGPFVNTLPFALALNPENSIADVLGSAKQDWQNGLQFQNIPIADLAAAKTRSLKRLGNTLLSIEREGSNTHPFTEGTYMSLDARTSAADFDLIANIRFNEQRINLSVEYWASRIAGPVAKAQMAAFEDAVSFLLEGVDLSVRDFPSHSPQDRAAFIRWNSTKPARLESCVHELVVEKMAEQPEALAVSSWDGELTYGELERASRRLAYHLVEKGVGPEVMVGMCMEKSKLGVVAMVATLLAGGGLVPLGVSHPLARIEGIVKDAASPLILVDRVHEERLAELGSYTELVAVDSFFDNASSTAIPSSGPFTSVGPDNVAWMIFTSGSTGKPKGVVLEHGSLATSILYHGRRLDIQPHDRLLQFAAFTFDAAIQEIITALAFGATTCIPSESDRMDRLSNYLAESKVTIATLTSTVAALVRPQETPTVRTIILMGEAVQAKVVDQWIDYATVINAYGPSECCIHSTCRPVTDSSASLNIGTAIAGATWVVNPTNINQLVPLGGQGELLLEGPLLARGYLNDSVKTAQAFVTDPAFVRELELGSNQHRMYRTGDLVQQNTDGTLTYLGRIDSQIKIRGQRVEIGEIEYHIGKQGGVHDAVVLYMRQGPLADRLVAAVNLGESSSVDRPQTSTVQVVSEDHMANARLRLREVQHGLSRQVMHYMVPSIWLPLSAMPMNQSGKTDRRALTDWIKSLSSDDIAALSNGGDADDVDDISATAVERELRQIWSEVLAVPLGSVTYSSSFFSLGGDSITAMQVVSASRSRGILITVRKVLDCQTIPELAAEVQATQNSDYAAVPEGAIALSPIQQMYFESIAADGLRADNEHCFNQGVLLHVTRQITLAELTRALDMAVAKHAMLRARFQYSQEQGWQQRIEREVTGSYRLCAHTAGDTEMSGIVAQSQSTLDIENGPVFAADLIEREDRQVLHLVAHHLVIDLVSWRILLRDLEEVIVNQKLPNPSSLSFPTWLGRQKESLSKVSNVLDTLPMIVPKTNWTYWGLTPGQETFGSRSSTQARCDIETTSLLTGGANSPLKTEPVEILLAGLLLSFQQVFADRPVPTVFTEGHGREAPDDGTDLSETIGWFTTMSPIYVSFTEASSNGAIDVLRQVKDQRRRIPGRGVPYFGSRFLTAQGKEQFAGHGPAEIMFNYTGRFQQLERDDALFHFDRDNNSSTMARAGDLVKLFAALDVAITIEAGKLCITVHYSNQSRCQEGIRRWVEVYGQTVKSLVNALNTVEPMATATDFPLARLSDSDMETIEGQYLPMIGLTSSAEIEDILPCSPIQQGILLTQLQSPSTYCIYQTCRIVPSGDAPVSADRLIAAWREVVSRHSILRTVLLEPLQGQENFIQVVLRHPEIGIIKKDGITDGVTAAEWLASRPSLDVSILGRPPHLLTVLTTVSGEVYCRFDISHALVDASSVTLIMRDLMDAYDEEKSQSAVSGSKYSTYVAFLQGRDSQDDLQYWTSLLQDAEPCLLPPNDPTHDAGDQPTIKKVSTRIDDIGKLHQFRDKYGVSVASIFQLSWALVLAMQTCSRNVSFGNLSSGRDVPISGVQELVGPMINMLVCHLDLNWGEGVSEAARKLQSQSTEAFEHQRTSLAAIQHGLGLSRNQPLFNSTLSYKRQASTSSGRASSITLEGLTWEDPTEYDVHINIEASSTSIDINMQYSTAAFSETTTKKLVDSLVHAVFAVCGGGDRALGQLRLLLPAEEAKLCEWNSVIPPRVERCVHELVLDRMVSQPEALAVSAWDGDLTYAELNHSSYQLAHHLVAERGIGPEVMVGLCMDKSKWAIVAMIAVLRAGGTLVPLGVQEPFSRIEMITGETGTPLVLVDRHHEQRVAGLDTQLFTVDYFFDAVSPISMLPPFAELSATRPDHAAWVIFTSGSTGRPKGVVLEHGSVATSILAHGPAIGIQIQDRVSQFAAYTFDVSIAEIMTTLTFGACVCVPSEDDRTNRLTQFLSESEVSIATLTSTVAALVQPDKTPKIRTLVLTGEAVQPKVVDQWMHRATVINAYGPAESSIWTTGKVIENALDATNIGTPLAGAFWVVNPDSVGQLVHIGELLIESPLLARGYLNDPVKTAASFITNLELLKNLGLGIGSRRMYRTGDLVRQNQDGTITYLGRRDTQVKIRGMQDAVVLYMNQGALAGRLIAFIVSSDTLAASHDQSKPQSSASIQRVHEEQNETADIWLKDVQQNLSQLVMHYMMPSVWIRLLAIPINASGKTDRLGLFRWVESLSAEDTAALTDAGAIEGEDIDESSATPIERELRQIWSEVLDVPISRVTYSTNFFSLGGDSITAMQVVSACRARGILVTVRKVLDCQTIPELAANSQTGREDAAHLARIPEGVFGLSPIQQMFFDEIAGDGLRADMDYRFNQAVSLYTTQRIEKTDLIWAINALVSKHAMLRARFRYTQDNAWQQWIEKDITGSYRFQDHTVADVELMQNLIEKSQATLDLEHGPVFAIDFIERQDRQGRQVLHLVAHHLVIDLVSWRILIRDLEELLVHHKLPNPTSLSFPVWLERQQDSLNRLVTETEEGADKSLEETLPVVVPNANWGYWGLVPGNDIYASLSTIEVQCGSATTSLLSGNANNALKTEPVDILLAALISSFQDVFADRSMPAVFTEGHGRETEEEEIDLSDTVSWFTTMVPVHVPQGAAKNAIEVLRKVKDQRRRLPGKGLPYFSSRYLTSHGREKFASHGPAEIIFNYLGRFQQLERDDALFHIEEDDTSASSQFGPLVKLFSVLDVSAGVEAGQLSIKVRFSRESLHQSAIKQWVKLYGDTVKTLVEELTMVPLTLTATDFPLARLSDSDWELIEGQYLKTEMGLSSTKEVEDILPCSAIQQGILLTQLQSPSTYCIHQTCRILPTDHTRPVSIQRLVVAWHQVVARHSILRSVLVEPLPAQESFLQIVLREPQIDVQITDGEDIRDEEAVEWLASQSTLDITKLSRPPHRLIILKTNTDNVYCRFDVSHALVDASSVALILRDLIAGYEGELGSSGGSNYSDYVAFLENRQQHNDLQYWKSLLADAEPCLLPLQQPVHEASQAHLGHVIDQLDDITMVHQFRDRHNVSIASICQLSWALVLANWTGSRNISFGNLSSGRDVPIPGVQELVGPMINMLVCNLFLDWDASTTIGGLARKLQSQSTESFEHQRASLASIQHELGFSKDQPLFNSTVSYRRQVSPSSDSKPAAIRLEAVISVDPTEYDVHVNIDASSTSLEFNLQYSTAVLSKAAATRLAESLVQAVRIVAQNVDRPLRELTSSLLPVGDKLQLQEWNSAVALPVQRCVHELVSDRIYTLPEALAISSWDGDMTYDQLGDTSRRLASYLVEQGVGPKTMVGLCLDKSKWAIVGMLAVLFAGGAVVPLGVQHPVSRIRSIVEDTNAPIILVDDIHEKRLATMTAHTQLLSVESFFRASQPVSLQSGKSTVRFEDPAWIIYTSGSSGVPKGVVLQHDALATSILAHGPVIGVKPFDRLSQFAAYTFDVSIAEIMTALSFGACVCVPSEQDRMERLPSFLKDANITIATLTSTVAALIQEDIPTIRTMVLTGEAVQSKVVDRWVQQATVINAYGPSESSIWASCNIVKSGTDALNIGKPLAGAFWVANPDNVGQLVVRGAPGELLIEGPLLAREYLNDPEKTSTAFVSDPKFMQELGLIPGRRLYRTGDLVQQNEDATLTYLGRIDSQIKIRGQRVEVAEIESQIVRLLPGAREAVVDLVRPEGEVHDGPLILVAVIEHSDASPSLDGEVFSLDGITQIPDNALQALGKLDNDLGSVLPPYMVPAAFLLVSKLPINASGKLDRRVVRQKLQSTSRDTIVRFSGSRDSIKAAPTTDLERKLQILYSTALRLVPEAVGLDDSFFKLGGDSVAAMKLTAVARAQNVSVSVADIFRWPRLADLSRVVEEKCSRDIGPLDKDPAPFSLWPELTETRTEIQTDDHNDKTRQARLLENIATRCNTSADQIEDVYPCSPMQAGLMAITAQRPEAYVIQRVFKLHDDLSTQQLKDAWTRLTGKLSVLRTRIIPSASAQADALQVVIQEAPVWQDCRSLEVYLATDRATPITYGRALSRTAVVDDPAGRYFIWTVHHSIYDGWSVARTMEMLTQLLSGQSTFSPAPVSRFINYLVQQDKDQIANFWNGHFEGANWVRYPAIASPQYRAKPRDTLQSQMHVNLETGGPATMSTLLRAAWALLVATNTGANDAAINVVLSGRMAPIDAVMDVISPLVTTVPFYVSASKQQSVRVFLETIHRRATEMIPYEHTGLQNIRALVPGLGSEFDPGHTFVVQPAGESESADLPMFKMDVERDATSFDAFDAYALTVECTVGGQNPGDVTIEVRYDRAVLAVDTVQHLIVQLAHIVQQLAQNAATDKPLSELQLLTDEDCDQLREWNSVVPPRLERCLHDLILETMTSYPTAPAISSWDGEMTYSELNDASQYLAYHLVDQGIGPEVMVGLCMDKSRWAVVAILAILRAGGVVVPLGIQQPLLRIEGIIQDTSCPLILVDRSQEHRLASLSDRASLFSVSSFFDAVPTPLAKSHNLSTKALPSVKPDHSAYVIFTSGSTGVPKGIILEHGALATSIIAHGTEFGMDIKNCDRVLQFAAYTFDVAIQDIIATLSFGACLCIPSEHDRMNRLVPYISEAKVTFAILTPTVAALIQPQDVPSIRTLILGGEALPAKVVDQWIGHANIINGYGPSECSIHSTCHKVQHSSEASIIGRGITAKTWVIDSSNSDQLVPIGAIGELIIEGPLLARGYLNDPLMTANSFITDPAFVQQLGFSPNRRMYRTGDLVQQNMDGSLVYLGRRDTQVKIRGQRVEVGEIESHILDLLPNAREAIVDVIQAAAEDQDVSPMLVAVIETDVSDTEVLASDTQMELYSPSQITQKMREGLDGLDTDLGLVLPAYMVPTVYLLASKLPLNASGKLDRRAVRDQLMLLPRHVLSSFSGLANSKQMPTTPMEQKLQTLYTSVLALKPEAVGISDSFFRLGGDSVAAMKLTAAAHAQGIPLTVADIFQWPRLADLAEAMEEKGGYGSSSAGQKDPEPFSLWPELQTGATEKSRLLADVAVQCGVSIDKIEDVYPCSPLQAGLMTITAQRPEAYVVQRVFKLQGGISTQTLKAAWTQLITDLPILRTRIIPSVQATALQVVLRETPIWQAGISLEDYLTADRAIPMIYGGALSRTAILEDGSHRHFIWTVHHSIYDGWSMAKTMEMLEGLLSGSTLSHPVSVPVSRFIGYLTQKDKDQTAMFWQKHLEGANWTRYPELPSQQHIINPRVTSHRRLRIPKIAGSTTFIVLRAAWALLVASKTGADEAVINVVLSGRAAPVKNLLHLVAPTITTVPFHVSTSTSQSIRDFLANIQGQATDMIPHEHTGLQNIRRMVSSLGPDFDPGHIFVVQPAAEMESTVTNSHLQIEREASSMDAFHAQALTIECTVGHDTRDVEVELRFDDAVIAADDVEQLLDQFNHLVQQLAENADKKLPLDRLQLLSPGQMAQICRWNSSIPSRVDRCIHELVMDQMTTRPAATAVTACDGDLTYRQLDDLSFQLALHLIETGIGPEVIVGVCMSKSKWAVVAMLAVLRAGGVVVPLGTRQPLGRIETIITDTAAPLILADRPQEQQLKGLQAPTQLLVVESFFEKTAKPAQNTGLQVFARSDNAAWIIYTSGSTGTPKGVVLEHGALATSILGHGKAYGLQSDDRILQFAAYTFDAAIQEIMTTLAFGACICIPSEQDRVERLTSYVAENRITMATLTSTVAALVRPRETPTVRTIILVGEAVQANVVDQWLQQAKVINGYGPSECSIASTCREIQNSSSALNIGTAIAGGLWVVKPSSTELAAFGSPGELLIDGPLLARGYLNDPTKTAASFITDTVFLKDLGLSGRRLYRTGDLVQQNRDGSLTYLGRIDTQIKIRGQRVEIGEIESQIEKHPTVRDAVVLYPRQGPLANRLVATVVLGETSTDSQSTAIQQISQEYQGYANTQFHELQRILSENLVYYMIPSVWVPLAAVPVNTSGKTDRLAISRWVQSLTEDEVSTLTSEETEYIDEELTTTIERQLRQIWSEVLDVPLHKITYTTTKFFSLGGDSITAMQVVSACRARGILVTVRKALDYQTIRELATQTQTTENSSSITKIPEGNFQLSPIQQMYFADIAADGIRADGEYRFNQGVTLHVTRQIDWEDLAQALDAIVSKHAMLRARFSHSQNGWHQWVEKHVPASYRLCKHTASDSRSMQDIIEHSQVSLDLEHGPVFAADLIHRPDMQKEDGQDGQVLHFVAHHLVIDLMSWRILLQDLETLLVYDQPLKMDILSFPTWLERQRQSLSKSLDNNIDPLPVTIPKADWEYWGLVPRQERSVDLVNIQTKCDSATTSILLSDAANSALKTEPVEILLAAFYHSFREHFSDRPVPPIFTEGHGREAMDGETNLTETVGWFTTLSPIYIPPSENNNKAIDVLRQLKDQRRRIPSRGMPYFASRFLTPEGRERYADHGPAEIVFNYLGRFQQLEREDALFRIDNGDDAISVAPVGNLVNISAVLDISATVHEGELCINIRFSPKTKHQKTLQRWAQSYSCAIESLVGELATVTPGATATDFPLARLSDNDMSLIENQYLTTMGVSSSQVQDILPCSPIQQGILLTQMQLPRAYLIYQTCRITSSNHNRPVAADRLIKAWKQVVARHSVLRTILMEPLPNQEKFVQIVLADPEIDVVCVDDVLDEDATQWFEAQSQLDPSDRRRPPHRLTTLATTSGEIYCRFDINHALVDASSMTLIIRDLIDAYGNGFTTGGSNYSSYIQFLQGKHQQDDLQYWKSALHNAEPCLLSPQDPTQSDAHGKILSVSKRIEDLTMLNIFRDTHGVSIASVCQLAWAVVLANWTNSQNISFGNLSSGRDAPIPDVQELVGPMINMLVCHLQVDWNANVSDVARKLQSQSAEAFEHQGVSLAAIQHELGLSRGQPLFNSILSYKRQVPTSSSTAEIIFEGLDSEDPTEYDINIHVVASPTDLEFDILYSNTLLSESAASRLADCLIQAVRAISENASRQLGQLNLLPAGDANQICKWNSDMAEPREACLHDLVIQQMAAHPTAQAVYAHDGELTYGDLDKFSRQLACYLVNQGVGPEVMIGLCMDKSKWSVVAILGILRAGGAVLPLGVSNPLARVEAILKDTAAPLAIVDEAQECRLGALEADIKLININSFVNAVPSAVEGLPVSEPCTSVQPNNIAWCQFTSGSTGTPKGVILEHGALATSIYSHSQRFGLRPGERLLQFAAFTFDATIYDIMAPLSFGGCTCIPSENDRMNRLGPFISEANVSFAFMTPAVVSLLQPKDVPSIKTLIVGGEIFTSKTIDQWIQHADVKEAYGPTECSIFSTCNDLLDSSQVRNIGMAVAARTWVINPFSNGQLVPISTPGELLIEGPLLSRGYLNDPEKTAGSFLVDPAFVKELGLSPGRRFYRTGDLVQQNSDGTLQYLDRIGTQVKINGQRLEIGEIESQILLLLPNAKYAYVCKQGSSLIGVIEATSSSRAAVVGSHSIITPNMEQQKSFEYIEASLRERLPSYMIPSTFLVINSFPLTDSGKLDRRRVVNLLDAIPSDKWLEYTARSQIYYAPVGRNEEILSELWAACINLEKKSVSRMDNFFELGGDSITAMSLVQRLAKLGLRIHVSEIFKDPVLCAMAARVTADIDENGEYERFSLVSSEERAQIVKENMSPARRQLNHFAFDATGPCDTSHLTSAIIQLVTKIESLRTGFAQTHKQKLLQVVYAKWEPAVRVFKTDKSPGAFYEETLERDMFIEPNLARPMFDVAIIITRTTQQVRIVFRMSHALYDGATLHQVWAALEAIMAGQTIGNFAPVGPYFQSLRAQTTNETEEYWGELVQGAAISSVSAGAEPRVSRLGIFSSKPIMLPRSRQFDFTLAVAVKAAWAIVLSHHVTSNDVVFADVLTGRTVVHPSVADVVACCARAVPCRVTCEPEWTAKTLLEQIKQQQVDSMAHEGLELQQIAQRFMGWSEEVESDAPDMRVSMVNHTKAQKQTMSLGSTVYERVTVDLSNSYASVDFAIESVEQEDGSLSLGMAYASDRISEQLARTLSNGFQAVLLEIIEDSGCNVSHLDDILRDLVVKQ.

The region spanning 12–85 (EPSKLVLGRV…QLAESIAQQN (74 aa)) is the Carrier 1 domain. O-(pantetheine 4'-phosphoryl)serine is present on Ser-46. The tract at residues 88 to 112 (AGNGVNGHANGNGMNGNGLHNEATI) is disordered. The span at 93–108 (NGHANGNGMNGNGLHN) shows a compositional bias: low complexity. A condensation 1 region spans residues 567–956 (PTSANVPRRV…EGVDLSVRDF (390 aa)). The tract at residues 989–1386 (KMAEQPEALA…GRIDSQIKIR (398 aa)) is adenylation 1. In terms of domain architecture, Carrier 2 spans 1523–1599 (ISATAVEREL…ELAAEVQATQ (77 aa)). Ser-1560 is modified (O-(pantetheine 4'-phosphoryl)serine). An epimerization 1 region spans residues 1609–2039 (GAIALSPIQQ…YGQTVKSLVN (431 aa)). Residues 2083 to 2518 (EDILPCSPIQ…LLLPAEEAKL (436 aa)) form a condensation 2 region. The adenylation 2 stretch occupies residues 2543-2934 (SQPEALAVSA…GRRDTQVKIR (392 aa)). In terms of domain architecture, Carrier 3 spans 3061-3137 (SSATPIEREL…ELAANSQTGR (77 aa)). Residue Ser-3098 is modified to O-(pantetheine 4'-phosphoryl)serine. The tract at residues 3153 to 3590 (LSPIQQMFFD…GDTVKTLVEE (438 aa)) is epimerization 2. The segment at 3634–4061 (EDILPCSAIQ…NVDRPLRELT (428 aa)) is condensation 3. The tract at residues 4098 to 4488 (TLPEALAISS…GRIDSQIKIR (391 aa)) is adenylation 3. The Carrier 4 domain occupies 4627 to 4703 (APTTDLERKL…DLSRVVEEKC (77 aa)). The residue at position 4664 (Ser-4664) is an O-(pantetheine 4'-phosphoryl)serine. The interval 4760 to 5181 (EDVYPCSPMQ…LLTDEDCDQL (422 aa)) is condensation 4. The segment at 5205-5605 (TSYPTAPAIS…GRRDTQVKIR (401 aa)) is adenylation 4. One can recognise a Carrier 5 domain in the interval 5745 to 5821 (MPTTPMEQKL…DLAEAMEEKG (77 aa)). Position 5782 is an O-(pantetheine 4'-phosphoryl)serine (Ser-5782). The condensation 5 stretch occupies residues 5868-6285 (EDVYPCSPLQ…LLSPGQMAQI (418 aa)). Positions 6307–6700 (QMTTRPAATA…GRIDTQIKIR (394 aa)) are adenylation 5. The Carrier 6 domain occupies 6834 to 6911 (ELTTTIERQL…ELATQTQTTE (78 aa)). At Ser-6872 the chain carries O-(pantetheine 4'-phosphoryl)serine. The epimerization 3 stretch occupies residues 6923 to 7360 (NFQLSPIQQM…SYSCAIESLV (438 aa)). The tract at residues 7403 to 7834 (VQDILPCSPI…LLPAGDANQI (432 aa)) is condensation 6. The tract at residues 7855 to 8253 (QQMAAHPTAQ…LDRIGTQVKI (399 aa)) is adenylation 6. One can recognise a Carrier 7 domain in the interval 8380–8456 (APVGRNEEIL…AMAARVTADI (77 aa)). Residue Ser-8417 is modified to O-(pantetheine 4'-phosphoryl)serine. The segment at 8490 to 8878 (HFAFDATGPC…EIIEDSGCNV (389 aa)) is condensation 7.

It belongs to the NRP synthetase family.

Its pathway is secondary metabolite biosynthesis. Nonribosomal peptide synthetase; part of the gene cluster that mediates the biosynthesis of the lipopeptides W493 A and B. W493 A and B consist of six amino acid residues D-allo-thr, L-Ala, D-Ala, L-Gln, D-Tyr, and L-Val/L-Ile linked to a 3-hydroxy-4-methyltetradecanoic acid polyketide chain. The biosynthesis starts with formation of the linear polyketide chain by the highly reducing polyketide synthase PKS40. The gene cluster contains a putative acyl-CoA ligase (FPSE_09184) for formation of a CoA thioester polyketide. The thiol bond could be hydrolyzed by the putative thioesterase (FPSE_09186) and then accepted by the first T domain in module 1 of NRPS32. The second T domain is responsible for accepting a threonine, which is adenylated by the A domain and epimerized to the D-allo-threonine formed by the E domain. The five successive modules incorporate Ala, Ala, Gln, Tyr, and Val/Ile into the final product, which is released by cyclization. The polypeptide is Nonribosomal peptide synthetase 32 (Fusarium pseudograminearum (strain CS3096) (Wheat and barley crown-rot fungus)).